The following is a 905-amino-acid chain: Protein translocase subunit SecA (905 aa).

Residues Q87, 105-109 (GEGKT), and D509 contribute to the ATP site. C890, C892, C901, and H902 together coordinate Zn(2+).

The protein belongs to the SecA family. Monomer and homodimer. Part of the essential Sec protein translocation apparatus which comprises SecA, SecYEG and auxiliary proteins SecDF-YajC and YidC. Zn(2+) is required as a cofactor.

It localises to the cell inner membrane. The protein localises to the cytoplasm. It catalyses the reaction ATP + H2O + cellular proteinSide 1 = ADP + phosphate + cellular proteinSide 2.. In terms of biological role, part of the Sec protein translocase complex. Interacts with the SecYEG preprotein conducting channel. Has a central role in coupling the hydrolysis of ATP to the transfer of proteins into and across the cell membrane, serving both as a receptor for the preprotein-SecB complex and as an ATP-driven molecular motor driving the stepwise translocation of polypeptide chains across the membrane. This is Protein translocase subunit SecA from Acinetobacter baylyi (strain ATCC 33305 / BD413 / ADP1).